The sequence spans 215 residues: MSKVYDWFEERLEIQAIADDITSKYVPPHVNIFYCLGGITLTCFLVQVATGFAMTFYYRPTVTEAFASVQYIMTEANFGWLIRSVHRWSASMMVLMMILHVFRVYLTGGFKKPRELTWVTGVILAVLTASFGVTGYSLPWDQIGYWAVKIVTGVPEAIPVIGSPLVELLRGSTSVGQSTLTRFYSLHTFVLPLLTAVFMLMHFSMIRKQGISGPL.

The chain crosses the membrane as a helical span at residues 32–52; that stretch reads IFYCLGGITLTCFLVQVATGF. Cys-35 is a heme c binding site. Heme b contacts are provided by His-86 and His-100. 3 helical membrane passes run 90-110, 116-136, and 186-206; these read ASMMVLMMILHVFRVYLTGGF, LTWVTGVILAVLTASFGVTGY, and LHTFVLPLLTAVFMLMHFSMI. Heme b is bound by residues His-187 and His-202.

The protein belongs to the cytochrome b family. PetB subfamily. As to quaternary structure, the 4 large subunits of the cytochrome b6-f complex are cytochrome b6, subunit IV (17 kDa polypeptide, PetD), cytochrome f and the Rieske protein, while the 4 small subunits are PetG, PetL, PetM and PetN. The complex functions as a dimer. It depends on heme b as a cofactor. The cofactor is heme c.

Its subcellular location is the plastid. The protein localises to the chloroplast thylakoid membrane. Functionally, component of the cytochrome b6-f complex, which mediates electron transfer between photosystem II (PSII) and photosystem I (PSI), cyclic electron flow around PSI, and state transitions. The polypeptide is Cytochrome b6 (Piper cenocladum (Ant piper)).